The primary structure comprises 738 residues: uncharacterized protein (738 aa).

Polar residues-rich tracts occupy residues 1 to 34, 140 to 169, and 177 to 197; these read MSSS…QVSS, TSSD…QSPP, and KPFS…STKD. Disordered stretches follow at residues 1–51 and 140–197; these read MSSS…AASI and TSSD…STKD. Positions 363 to 434 constitute an RRM domain; that stretch reads SRLFLGHLNT…QKLHLEISKI (72 aa). Residues 466-487 form a disordered region; sequence YPTSSRKRTRSPLMSKGKSYDR.

This is an uncharacterized protein from Schizosaccharomyces pombe (strain 972 / ATCC 24843) (Fission yeast).